Here is a 117-residue protein sequence, read N- to C-terminus: Calcitonin receptor-stimulating peptide 2 (117 aa).

The N-terminal stretch at 1 to 25 (MGFWKFPPFLVLSILVLYQAGMFHT) is a signal peptide. The propeptide occupies 26-79 (APVRLPLESSFDSATLTEEEVSLLLVAMVKDYVQMKATVLEQESEDFSITAQEK). A disulfide bridge connects residues Cys-81 and Cys-86.

It belongs to the calcitonin family. In terms of tissue distribution, mainly expressed in the thyroid gland and CNS. Found in the nerve cells of the cerebrum, hippocampus, hypothalamus, pons/midbrain and thalamus. Also detected in the glia-like cells of pons/midbrain and in meninx of tactus opticus.

The protein localises to the secreted. This chain is Calcitonin receptor-stimulating peptide 2 (CRSP2), found in Sus scrofa (Pig).